Here is a 65-residue protein sequence, read N- to C-terminus: Putative beta-neurotoxin RjAa2 (65 aa).

In terms of domain architecture, LCN-type CS-alpha/beta spans 1-64 (KEGYPMGRDG…VWDSSTNKCG (64 aa)). 4 cysteine pairs are disulfide-bonded: C11–C63, C15–C37, C22–C44, and C26–C46.

Belongs to the long (4 C-C) scorpion toxin superfamily. Sodium channel inhibitor family. Beta subfamily. As to expression, expressed by the venom gland.

Its subcellular location is the secreted. In terms of biological role, beta toxins bind voltage-independently at site-4 of sodium channels (Nav) and shift the voltage of activation toward more negative potentials thereby affecting sodium channel activation and promoting spontaneous and repetitive firing. The protein is Putative beta-neurotoxin RjAa2 of Rhopalurus junceus (Caribbean blue scorpion).